The primary structure comprises 160 residues: 2-C-methyl-D-erythritol 2,4-cyclodiphosphate synthase (160 aa).

The a divalent metal cation site is built by D11 and H13. Residues 11 to 13 (DIH) and 37 to 38 (HS) contribute to the 4-CDP-2-C-methyl-D-erythritol 2-phosphate site. H45 contributes to the a divalent metal cation binding site. Residues 59-61 (DIG), 135-138 (TTNE), and R145 contribute to the 4-CDP-2-C-methyl-D-erythritol 2-phosphate site.

Belongs to the IspF family. Homotrimer. Requires a divalent metal cation as cofactor.

The enzyme catalyses 4-CDP-2-C-methyl-D-erythritol 2-phosphate = 2-C-methyl-D-erythritol 2,4-cyclic diphosphate + CMP. It functions in the pathway isoprenoid biosynthesis; isopentenyl diphosphate biosynthesis via DXP pathway; isopentenyl diphosphate from 1-deoxy-D-xylulose 5-phosphate: step 4/6. In terms of biological role, involved in the biosynthesis of isopentenyl diphosphate (IPP) and dimethylallyl diphosphate (DMAPP), two major building blocks of isoprenoid compounds. Catalyzes the conversion of 4-diphosphocytidyl-2-C-methyl-D-erythritol 2-phosphate (CDP-ME2P) to 2-C-methyl-D-erythritol 2,4-cyclodiphosphate (ME-CPP) with a corresponding release of cytidine 5-monophosphate (CMP). This chain is 2-C-methyl-D-erythritol 2,4-cyclodiphosphate synthase, found in Synechococcus elongatus (strain ATCC 33912 / PCC 7942 / FACHB-805) (Anacystis nidulans R2).